We begin with the raw amino-acid sequence, 184 residues long: Ribosome-recycling factor (184 aa).

This sequence belongs to the RRF family.

It is found in the cytoplasm. Its function is as follows. Responsible for the release of ribosomes from messenger RNA at the termination of protein biosynthesis. May increase the efficiency of translation by recycling ribosomes from one round of translation to another. The chain is Ribosome-recycling factor from Mycoplasma pneumoniae (strain ATCC 29342 / M129 / Subtype 1) (Mycoplasmoides pneumoniae).